Reading from the N-terminus, the 783-residue chain is Probable phosphoketolase (783 aa).

This sequence belongs to the XFP family. The cofactor is thiamine diphosphate.

This Rhodopseudomonas palustris (strain TIE-1) protein is Probable phosphoketolase.